Here is a 111-residue protein sequence, read N- to C-terminus: Colipase (111 aa).

The N-terminal stretch at 1–16 is a signal peptide; the sequence is MKVLVLLLVTLAVVYA. Positions 17 to 21 are cleaved as a propeptide — enterostatin, activation peptide; the sequence is APDPR. 5 cysteine pairs are disulfide-bonded: cysteine 33–cysteine 44, cysteine 39–cysteine 55, cysteine 43–cysteine 77, cysteine 65–cysteine 85, and cysteine 79–cysteine 103.

This sequence belongs to the colipase family. As to quaternary structure, forms a 1:1 stoichiometric complex with pancreatic lipase. In terms of tissue distribution, expressed by the pancreas.

It is found in the secreted. In terms of biological role, colipase is a cofactor of pancreatic lipase. It allows the lipase to anchor itself to the lipid-water interface. Without colipase the enzyme is washed off by bile salts, which have an inhibitory effect on the lipase. Its function is as follows. Enterostatin has a biological activity as a satiety signal. The polypeptide is Colipase (CLPS) (Ictidomys tridecemlineatus (Thirteen-lined ground squirrel)).